The following is a 744-amino-acid chain: Vesicle-fusing ATPase (744 aa).

Lysine 105 is subject to N6-acetyllysine. Serine 207 is subject to Phosphoserine. Tyrosine 259 is modified (phosphotyrosine). Residues 505–510 and 545–552 each bind ATP; these read NGIIKW and PHSGKTAL. Threonine 550 serves as a coordination point for Mg(2+). Serine 569 is subject to Phosphoserine; by CDK16.

Belongs to the AAA ATPase family. As to quaternary structure, homohexamer. Interacts with GABARAP and GABARAPL2. Interacts with GRIA2. Interacts with PLK2, leading to disrupt the interaction with GRIA2. Interacts with MUSK; may regulate MUSK endocytosis and activity. Interacts with CDK16. The cofactor is Mg(2+). Phosphorylation at Ser-569 interferes with homohexamerization.

The protein localises to the cytoplasm. The catalysed reaction is ATP + H2O = ADP + phosphate + H(+). In terms of biological role, required for vesicle-mediated transport. Catalyzes the fusion of transport vesicles within the Golgi cisternae. Is also required for transport from the endoplasmic reticulum to the Golgi stack. Seems to function as a fusion protein required for the delivery of cargo proteins to all compartments of the Golgi stack independent of vesicle origin. Interaction with AMPAR subunit GRIA2 leads to influence GRIA2 membrane cycling. In Cricetulus griseus (Chinese hamster), this protein is Vesicle-fusing ATPase (NSF).